Consider the following 160-residue polypeptide: Small ribosomal subunit protein uS7 (160 aa).

This sequence belongs to the universal ribosomal protein uS7 family. In terms of assembly, part of the 30S ribosomal subunit. Contacts proteins S9 and S11.

One of the primary rRNA binding proteins, it binds directly to 16S rRNA where it nucleates assembly of the head domain of the 30S subunit. Is located at the subunit interface close to the decoding center, probably blocks exit of the E-site tRNA. The sequence is that of Small ribosomal subunit protein uS7 from Anaplasma marginale (strain Florida).